The chain runs to 129 residues: Small ribosomal subunit protein uS11 (129 aa).

The protein belongs to the universal ribosomal protein uS11 family. In terms of assembly, part of the 30S ribosomal subunit. Interacts with proteins S7 and S18. Binds to IF-3.

Located on the platform of the 30S subunit, it bridges several disparate RNA helices of the 16S rRNA. Forms part of the Shine-Dalgarno cleft in the 70S ribosome. The chain is Small ribosomal subunit protein uS11 from Bradyrhizobium sp. (strain BTAi1 / ATCC BAA-1182).